Consider the following 329-residue polypeptide: MSAAAHRTPKSGRQSLLFQDLASPVSARRGKFSSPGQAAAVSALWRENFGGSDLPPPPMYTLDDRSDFSPESGIADYSASPDAKSDRRTPFQSSGKNIVTPGKGKLEASPSFSLLNAQQSQQVSGSPSWWSQSKAGSSTEQDDKGKGSPVEGVVQPGALVTLPPPREVARPEVQRQIIPTGNLDEEEWVTVYGFSPGDTNLVLREFEKCGMVLKHVPGPRNANWMHILYQNRSDAHKALNKAGMMINGVVIVGVKPVDPIQKQALNERLNNQGFMPLPPPSSTRNTARPLSRPQYLQNGSAFSPQPSGGAMASPSKSMVSKFFDLMFGV.

Disordered regions lie at residues 48–105 and 123–167; these read NFGG…GKGK and VSGS…PPRE. A compositionally biased stretch (polar residues) spans 123-139; it reads VSGSPSWWSQSKAGSST. In terms of domain architecture, RRM Nup35-type spans 183–264; it reads LDEEEWVTVY…KPVDPIQKQA (82 aa). Residues 271–315 form a disordered region; the sequence is NQGFMPLPPPSSTRNTARPLSRPQYLQNGSAFSPQPSGGAMASPS. Residues 282 to 306 show a composition bias toward polar residues; the sequence is STRNTARPLSRPQYLQNGSAFSPQP.

The protein belongs to the Nup35 family. Part of the nuclear pore complex (NPC). The NPC has an eight-fold symmetrical structure comprising a central transport channel and two rings, the cytoplasmic and nuclear rings, to which eight filaments are attached. The cytoplasmic filaments have loose ends, while the nuclear filaments are joined in a distal ring, forming a nuclear basket. NPCs are highly dynamic in configuration and composition, and can be devided in 3 subcomplexes, the NUP62 subcomplex, the NUP107-160 subcomplex and the NUP93 subcomplex, containing approximately 30 different nucleoporin proteins.

The protein localises to the nucleus. The protein resides in the nuclear pore complex. The sequence is that of Nuclear pore complex protein NUP35 from Arabidopsis thaliana (Mouse-ear cress).